The following is a 201-amino-acid chain: dTTP/UTP pyrophosphatase (201 aa).

Residue D76 is the Proton acceptor of the active site.

The protein belongs to the Maf family. YhdE subfamily. A divalent metal cation is required as a cofactor.

Its subcellular location is the cytoplasm. It catalyses the reaction dTTP + H2O = dTMP + diphosphate + H(+). It carries out the reaction UTP + H2O = UMP + diphosphate + H(+). Nucleoside triphosphate pyrophosphatase that hydrolyzes dTTP and UTP. May have a dual role in cell division arrest and in preventing the incorporation of modified nucleotides into cellular nucleic acids. The chain is dTTP/UTP pyrophosphatase from Neisseria meningitidis serogroup A / serotype 4A (strain DSM 15465 / Z2491).